The chain runs to 217 residues: Phosphate-specific transport system accessory protein PhoU homolog 2 (217 aa).

The protein belongs to the PhoU family. Homodimer.

The protein localises to the cytoplasm. Its function is as follows. Plays a role in the regulation of phosphate uptake. This chain is Phosphate-specific transport system accessory protein PhoU homolog 2, found in Methanothermobacter thermautotrophicus (strain ATCC 29096 / DSM 1053 / JCM 10044 / NBRC 100330 / Delta H) (Methanobacterium thermoautotrophicum).